We begin with the raw amino-acid sequence, 237 residues long: Ribose-5-phosphate isomerase A (237 aa).

Substrate contacts are provided by residues 33-36, 90-93, and 103-106; these read TGST, DGAD, and KGGG. Residue E112 is the Proton acceptor of the active site. Position 130 (K130) interacts with substrate.

Belongs to the ribose 5-phosphate isomerase family. In terms of assembly, homodimer.

The catalysed reaction is aldehydo-D-ribose 5-phosphate = D-ribulose 5-phosphate. It functions in the pathway carbohydrate degradation; pentose phosphate pathway; D-ribose 5-phosphate from D-ribulose 5-phosphate (non-oxidative stage): step 1/1. Catalyzes the reversible conversion of ribose-5-phosphate to ribulose 5-phosphate. The protein is Ribose-5-phosphate isomerase A of Gloeothece citriformis (strain PCC 7424) (Cyanothece sp. (strain PCC 7424)).